The primary structure comprises 239 residues: Ribulose-phosphate 3-epimerase (239 aa).

S9 is a binding site for substrate. A divalent metal cation is bound by residues H34, D36, and H78. The active-site Proton acceptor is D36. Substrate is bound by residues H78, 154–157 (GFGG), 183–185 (DGG), and 205–207 (GTS). Residue D183 participates in a divalent metal cation binding. D183 acts as the Proton donor in catalysis.

Belongs to the ribulose-phosphate 3-epimerase family. It depends on Co(2+) as a cofactor. The cofactor is Fe(2+). Mn(2+) is required as a cofactor. Requires Zn(2+) as cofactor.

The enzyme catalyses D-ribulose 5-phosphate = D-xylulose 5-phosphate. Its pathway is carbohydrate degradation; pentose phosphate pathway; D-xylulose 5-phosphate from D-ribulose 5-phosphate (non-oxidative stage): step 1/1. Its function is as follows. Catalyzes the reversible epimerization of D-ribulose 5-phosphate to D-xylulose 5-phosphate. The chain is Ribulose-phosphate 3-epimerase (RPE1) from Eremothecium gossypii (strain ATCC 10895 / CBS 109.51 / FGSC 9923 / NRRL Y-1056) (Yeast).